Consider the following 63-residue polypeptide: Large ribosomal subunit protein bL28 (63 aa).

It belongs to the bacterial ribosomal protein bL28 family.

The chain is Large ribosomal subunit protein bL28 (rpmB) from Selenomonas ruminantium.